Consider the following 114-residue polypeptide: Photosystem II reaction center Psb28 protein (114 aa).

It belongs to the Psb28 family. As to quaternary structure, part of the photosystem II complex.

It localises to the cellular thylakoid membrane. The polypeptide is Photosystem II reaction center Psb28 protein (Rippkaea orientalis (strain PCC 8801 / RF-1) (Cyanothece sp. (strain PCC 8801))).